The chain runs to 247 residues: Ribonuclease PH (247 aa).

Residues R87 and 125–127 each bind phosphate; that span reads GTR.

This sequence belongs to the RNase PH family. In terms of assembly, homohexameric ring arranged as a trimer of dimers.

It catalyses the reaction tRNA(n+1) + phosphate = tRNA(n) + a ribonucleoside 5'-diphosphate. Phosphorolytic 3'-5' exoribonuclease that plays an important role in tRNA 3'-end maturation. Removes nucleotide residues following the 3'-CCA terminus of tRNAs; can also add nucleotides to the ends of RNA molecules by using nucleoside diphosphates as substrates, but this may not be physiologically important. Probably plays a role in initiation of 16S rRNA degradation (leading to ribosome degradation) during starvation. This Nostoc sp. (strain PCC 7120 / SAG 25.82 / UTEX 2576) protein is Ribonuclease PH.